A 163-amino-acid chain; its full sequence is MVKKNSKKAAPATIARNKRATFEYRFEEKMEAGISLMGWEVKSIRMGKVNLSDCYVFLKNGEAFMHGCTIIPLNTASTHVVCDPIRLKKLLLSRKELDKLAGLVERQGYSIIPISMYWRKGAWVKVEIGLGKGKKDHDKREDTKAREWEVEKARVMKKEKTRG.

It belongs to the SmpB family.

The protein resides in the cytoplasm. In terms of biological role, required for rescue of stalled ribosomes mediated by trans-translation. Binds to transfer-messenger RNA (tmRNA), required for stable association of tmRNA with ribosomes. tmRNA and SmpB together mimic tRNA shape, replacing the anticodon stem-loop with SmpB. tmRNA is encoded by the ssrA gene; the 2 termini fold to resemble tRNA(Ala) and it encodes a 'tag peptide', a short internal open reading frame. During trans-translation Ala-aminoacylated tmRNA acts like a tRNA, entering the A-site of stalled ribosomes, displacing the stalled mRNA. The ribosome then switches to translate the ORF on the tmRNA; the nascent peptide is terminated with the 'tag peptide' encoded by the tmRNA and targeted for degradation. The ribosome is freed to recommence translation, which seems to be the essential function of trans-translation. The protein is SsrA-binding protein of Shewanella sp. (strain ANA-3).